Here is an 86-residue protein sequence, read N- to C-terminus: Putative protein adenylyltransferase MJ1215 (86 aa).

The short motif at 35 to 49 (GSYARGEQKETSDID) is the GSX(10)DXD motif element. Positions 47, 49, and 79 each coordinate Mg(2+).

This sequence belongs to the MntA antitoxin family. Probably forms a complex with cognate toxin MJ1216. It depends on Mg(2+) as a cofactor.

The catalysed reaction is L-tyrosyl-[protein] + ATP = O-(5'-adenylyl)-L-tyrosyl-[protein] + diphosphate. The enzyme catalyses O-(5'-adenylyl)-L-tyrosyl-[protein] + ATP = O-[5'-(adenylyl-(5'-&gt;3')-adenylyl)]-L-tyrosyl-[protein] + diphosphate. Probable antitoxin component of a putative type VII toxin-antitoxin (TA) system. Neutralizes cognate toxic MJ1216 by di-AMPylation. The protein is Putative protein adenylyltransferase MJ1215 of Methanocaldococcus jannaschii (strain ATCC 43067 / DSM 2661 / JAL-1 / JCM 10045 / NBRC 100440) (Methanococcus jannaschii).